Reading from the N-terminus, the 89-residue chain is Small ribosomal subunit protein uS14A (89 aa).

The protein belongs to the universal ribosomal protein uS14 family. As to quaternary structure, part of the 30S ribosomal subunit. Contacts proteins S3 and S10.

Binds 16S rRNA, required for the assembly of 30S particles and may also be responsible for determining the conformation of the 16S rRNA at the A site. This chain is Small ribosomal subunit protein uS14A, found in Staphylococcus aureus (strain Newman).